The chain runs to 377 residues: Anhydro-N-acetylmuramic acid kinase (377 aa).

12–19 (GTSLDGID) provides a ligand contact to ATP.

It belongs to the anhydro-N-acetylmuramic acid kinase family.

It carries out the reaction 1,6-anhydro-N-acetyl-beta-muramate + ATP + H2O = N-acetyl-D-muramate 6-phosphate + ADP + H(+). It participates in amino-sugar metabolism; 1,6-anhydro-N-acetylmuramate degradation. It functions in the pathway cell wall biogenesis; peptidoglycan recycling. Catalyzes the specific phosphorylation of 1,6-anhydro-N-acetylmuramic acid (anhMurNAc) with the simultaneous cleavage of the 1,6-anhydro ring, generating MurNAc-6-P. Is required for the utilization of anhMurNAc either imported from the medium or derived from its own cell wall murein, and thus plays a role in cell wall recycling. The polypeptide is Anhydro-N-acetylmuramic acid kinase (Methylorubrum populi (strain ATCC BAA-705 / NCIMB 13946 / BJ001) (Methylobacterium populi)).